Reading from the N-terminus, the 148-residue chain is Putative carbonic anhydrase (148 aa).

The Alpha-carbonic anhydrase domain maps to 1–146; that stretch reads CLKRLQPGEM…LNGRTVFEVH (146 aa).

Belongs to the alpha-carbonic anhydrase family. It depends on Zn(2+) as a cofactor. Component of the acid-insoluble organic matrix of the aragonitic skeleton (at protein level).

It is found in the secreted. The enzyme catalyses hydrogencarbonate + H(+) = CO2 + H2O. Functionally, reversible hydration of carbon dioxide. The polypeptide is Putative carbonic anhydrase (Acropora millepora (Staghorn coral)).